The chain runs to 455 residues: MGPDAKKQKLEGVDHLQNGFPVTRFLAWCEKVGLELNPKVYISTEGTVSQYGMLAREDIADGELLFTVPRSAILSQNTTRIQELLEKEQESLQSTSGWVPLLISLLYEATDSSSLWAPYFGLWPELDPPDMPMFWSEEEQTKLLQGTGVLEAIRNDLKNIEEEYNSIVLPFITRNPEKFCPMKHTLDLYKRLVAFVMAYSFQEPLEENDEEDEDEKDILPPMMVPVADLLNHVAHHNAHLEFTPECLRMVTTKSVHAGQELFNTYGEMANWQLLHMYGFAEPHPQNSNETADIQMVTMREAALQAAQTEDDRLEMQKRWDFLCHIEMVGEEGAFVFGLEEVMTEEELKVSLKVLCMSKEEFAEYKENDGWEEDEGDDEQTLMIQEISHLPTPWRKLLHLSAKLTLKNYSTELSMDEALVNNITAYAKLSSREQRSLQVKYGQKRILHQLLELTKS.

The region spanning 38–266 (PKVYISTEGT…AGQELFNTYG (229 aa)) is the SET domain.

Belongs to the class V-like SAM-binding methyltransferase superfamily. Histone-lysine methyltransferase family. SETD6 subfamily.

The protein resides in the nucleus. Protein-lysine N-methyltransferase. This is N-lysine methyltransferase setd6 (setd6) from Xenopus laevis (African clawed frog).